Here is a 345-residue protein sequence, read N- to C-terminus: 4-hydroxyproline 2-epimerase 1 (345 aa).

Residue Gln-85 participates in substrate binding. The Proton acceptor role is filled by Ser-93. Substrate-binding positions include 94 to 95 (GS) and Asp-251. The Proton donor role is filled by Cys-255. 256–257 (GT) lines the substrate pocket.

Belongs to the proline racemase family.

It catalyses the reaction trans-4-hydroxy-L-proline = cis-4-hydroxy-D-proline. Functionally, catalyzes the epimerization of trans-4-hydroxy-L-proline (t4LHyp) to cis-4-hydroxy-D-proline (c4DHyp). May be involved in a degradation pathway of t4LHyp. Can also catalyze the epimerization of trans-3-hydroxy-L-proline (t3LHyp) to cis-3-hydroxy-D-proline (c3DHyp) in vitro. Displays no proline racemase activity. This Rhizobium rhizogenes (strain K84 / ATCC BAA-868) (Agrobacterium radiobacter) protein is 4-hydroxyproline 2-epimerase 1.